The primary structure comprises 184 residues: Photosystem I assembly protein Ycf4 (184 aa).

The next 2 membrane-spanning stretches (helical) occupy residues F22 to S42 and I57 to S77.

This sequence belongs to the Ycf4 family.

It is found in the plastid. It localises to the chloroplast thylakoid membrane. Functionally, seems to be required for the assembly of the photosystem I complex. The chain is Photosystem I assembly protein Ycf4 from Ceratophyllum demersum (Rigid hornwort).